We begin with the raw amino-acid sequence, 273 residues long: Shikimate dehydrogenase (NADP(+)) (273 aa).

Shikimate is bound by residues 14–16 and Thr61; that span reads SKS. Catalysis depends on Lys65, which acts as the Proton acceptor. The shikimate site is built by Asn86 and Asp102. Residues 126–130, 150–155, and Met213 each bind NADP(+); these read GAGGA and NRTHAR. Tyr215 contacts shikimate. An NADP(+)-binding site is contributed by Gly237.

Belongs to the shikimate dehydrogenase family. Homodimer.

It carries out the reaction shikimate + NADP(+) = 3-dehydroshikimate + NADPH + H(+). It functions in the pathway metabolic intermediate biosynthesis; chorismate biosynthesis; chorismate from D-erythrose 4-phosphate and phosphoenolpyruvate: step 4/7. Its function is as follows. Involved in the biosynthesis of the chorismate, which leads to the biosynthesis of aromatic amino acids. Catalyzes the reversible NADPH linked reduction of 3-dehydroshikimate (DHSA) to yield shikimate (SA). This Aeromonas hydrophila subsp. hydrophila (strain ATCC 7966 / DSM 30187 / BCRC 13018 / CCUG 14551 / JCM 1027 / KCTC 2358 / NCIMB 9240 / NCTC 8049) protein is Shikimate dehydrogenase (NADP(+)).